A 274-amino-acid polypeptide reads, in one-letter code: Large ribosomal subunit protein uL2 (274 aa).

The segment at Val223–Lys274 is disordered.

The protein belongs to the universal ribosomal protein uL2 family. As to quaternary structure, part of the 50S ribosomal subunit. Forms a bridge to the 30S subunit in the 70S ribosome.

Its function is as follows. One of the primary rRNA binding proteins. Required for association of the 30S and 50S subunits to form the 70S ribosome, for tRNA binding and peptide bond formation. It has been suggested to have peptidyltransferase activity; this is somewhat controversial. Makes several contacts with the 16S rRNA in the 70S ribosome. The sequence is that of Large ribosomal subunit protein uL2 from Shewanella amazonensis (strain ATCC BAA-1098 / SB2B).